Consider the following 190-residue polypeptide: Myophilin (190 aa).

The interval 1–23 (MSNVPPPSGLSYQVKKKLEGKRD) is disordered. The 107-residue stretch at 24 to 130 (KDQENEALEW…RTLFALGRTC (107 aa)) folds into the Calponin-homology (CH) domain. The Calponin-like repeat unit spans residues 165–189 (VSLQYGSNKGASQAGINMGKQRMIM).

This sequence belongs to the calponin family. As to expression, muscle specific.

The chain is Myophilin from Echinococcus granulosus (Hydatid tapeworm).